Reading from the N-terminus, the 571-residue chain is Isocitrate dehydrogenase kinase/phosphatase (571 aa).

Residues 318-324 (APGVRGM) and Lys339 each bind ATP. Asp374 is an active-site residue.

Belongs to the AceK family.

Its subcellular location is the cytoplasm. The catalysed reaction is L-seryl-[isocitrate dehydrogenase] + ATP = O-phospho-L-seryl-[isocitrate dehydrogenase] + ADP + H(+). Functionally, bifunctional enzyme which can phosphorylate or dephosphorylate isocitrate dehydrogenase (IDH) on a specific serine residue. This is a regulatory mechanism which enables bacteria to bypass the Krebs cycle via the glyoxylate shunt in response to the source of carbon. When bacteria are grown on glucose, IDH is fully active and unphosphorylated, but when grown on acetate or ethanol, the activity of IDH declines drastically concomitant with its phosphorylation. In Pseudomonas entomophila (strain L48), this protein is Isocitrate dehydrogenase kinase/phosphatase.